Consider the following 60-residue polypeptide: Large ribosomal subunit protein uL30 (60 aa).

The protein belongs to the universal ribosomal protein uL30 family. In terms of assembly, part of the 50S ribosomal subunit.

The chain is Large ribosomal subunit protein uL30 from Pseudoalteromonas translucida (strain TAC 125).